Here is a 374-residue protein sequence, read N- to C-terminus: Conserved virulence factor C (374 aa).

Belongs to the CvfC family.

Functionally, required for hemolysin production. Contributes to virulence in both silkworm-infection model and mice. The polypeptide is Conserved virulence factor C (cvfC) (Staphylococcus aureus (strain NCTC 8325 / PS 47)).